Consider the following 228-residue polypeptide: Lipoprotein-releasing system ATP-binding protein LolD (228 aa).

Positions 6-227 constitute an ABC transporter domain; sequence LELLGIDRTY…LKDGKLIDYV (222 aa). Position 42–49 (42–49) interacts with ATP; sequence GPSGSGKS.

The protein belongs to the ABC transporter superfamily. Lipoprotein translocase (TC 3.A.1.125) family. As to quaternary structure, the complex is composed of two ATP-binding proteins (LolD) and two transmembrane proteins (LolC and LolE).

The protein localises to the cell inner membrane. In terms of biological role, part of the ABC transporter complex LolCDE involved in the translocation of mature outer membrane-directed lipoproteins, from the inner membrane to the periplasmic chaperone, LolA. Responsible for the formation of the LolA-lipoprotein complex in an ATP-dependent manner. The polypeptide is Lipoprotein-releasing system ATP-binding protein LolD (Hyphomonas neptunium (strain ATCC 15444)).